The sequence spans 146 residues: Putative pre-16S rRNA nuclease (146 aa).

The protein belongs to the YqgF nuclease family.

It is found in the cytoplasm. Functionally, could be a nuclease involved in processing of the 5'-end of pre-16S rRNA. The protein is Putative pre-16S rRNA nuclease of Pediococcus pentosaceus (strain ATCC 25745 / CCUG 21536 / LMG 10740 / 183-1w).